A 523-amino-acid polypeptide reads, in one-letter code: Mogroside I-A1 synthase (523 aa).

The active-site Proton acceptor is the His39. Residue Asp136 is the Charge relay of the active site. UDP-alpha-D-glucose contacts are provided by Ser311, Gln374, Trp392, Asn393, Ser394, Glu397, Asp413, and Gln414.

The protein belongs to the UDP-glycosyltransferase family. Highly expressed in young fruits 15 and 34 days after anthesis (15-DAA and 34-DAA).

It catalyses the reaction mogrol + UDP-alpha-D-glucose = mogroside I-A1 + UDP + H(+). The catalysed reaction is mogroside I-A1 + UDP-alpha-D-glucose = mogroside IIE + UDP + H(+). The enzyme catalyses mogroside IE + UDP-alpha-D-glucose = mogroside IIE + UDP + H(+). It carries out the reaction mogroside II-A1 + UDP-alpha-D-glucose = mogroside IIIX + UDP + H(+). It catalyses the reaction mogroside II-A + UDP-alpha-D-glucose = mogroside III + UDP + H(+). The catalysed reaction is mogroside IIE + UDP-alpha-D-glucose = mogroside III-C3(1-&gt;6) + UDP + H(+). The enzyme catalyses mogroside III + UDP-alpha-D-glucose = isomogroside IV + UDP + H(+). It carries out the reaction mogroside III + UDP-alpha-D-glucose = mogroside IV + UDP + H(+). It catalyses the reaction mogroside IIIX + UDP-alpha-D-glucose = mogroside IVA + UDP + H(+). The catalysed reaction is siamenoside I + UDP-alpha-D-glucose = isomogroside V + UDP + H(+). Its pathway is secondary metabolite biosynthesis; terpenoid biosynthesis. Its function is as follows. UDP-glycosyltransferase involved in the biosynthesis of cucurbitacin and mogroside tetracyclic triterpene natural products (e.g. siamenoside I and mogrosides IV, V and VI). Cucurbitacins have cytotoxic properties and exhibit deterrent taste as a defense barrier against herbivores. Mogrosides are nonsugar highly oxygenated compounds used as high-intensity zero-calorie sweeteners; they also possess pharmacological properties such as regulating immunity, lowering blood sugar and lipid levels, protecting the liver, and acting as antioxidants and antitumor agents. Catalyzes the C24 primary glucosylation of mogrol and mogroside I-E1, and the C3 primary glucosylation of mogroside I-A1, mogroside II-A1 and mogroside II-A. Also supports branching glucosylations of mogroside II-E, mogroside III, mogroside IIIx and siamenoside I. In Siraitia grosvenorii (Monk's fruit), this protein is Mogroside I-A1 synthase.